Consider the following 73-residue polypeptide: MERKVFLLLFVIVLLTLPGFMSAAKKEIPYKRQKFPKKSQCIEACANALTNGDKSKITDVKSRFYKCICYYNP.

An N-terminal signal peptide occupies residues M1–A23.

It belongs to the scoloptoxin-15 family. Contains 2 disulfide bonds. In terms of tissue distribution, expressed by the venom gland.

The protein resides in the secreted. The sequence is that of U-scoloptoxin(15)-Sm3a from Scolopendra morsitans (Tanzanian blue ringleg centipede).